Here is a 355-residue protein sequence, read N- to C-terminus: GTP 3',8-cyclase (355 aa).

The Radical SAM core domain occupies 16 to 242; that stretch reads RYGRRATDMR…PDPRARDGAP (227 aa). Position 25 (R25) interacts with GTP. C32 and C36 together coordinate [4Fe-4S] cluster. Y38 lines the S-adenosyl-L-methionine pocket. Position 39 (C39) interacts with [4Fe-4S] cluster. A GTP-binding site is contributed by R76. An S-adenosyl-L-methionine-binding site is contributed by G80. Position 107 (T107) interacts with GTP. S131 lines the S-adenosyl-L-methionine pocket. K168 contacts GTP. M202 lines the S-adenosyl-L-methionine pocket. [4Fe-4S] cluster contacts are provided by C277 and C280. 282 to 284 is a binding site for GTP; the sequence is RTR. [4Fe-4S] cluster is bound at residue C294.

It belongs to the radical SAM superfamily. MoaA family. In terms of assembly, monomer. [4Fe-4S] cluster is required as a cofactor.

The catalysed reaction is GTP + AH2 + S-adenosyl-L-methionine = (8S)-3',8-cyclo-7,8-dihydroguanosine 5'-triphosphate + 5'-deoxyadenosine + L-methionine + A + H(+). It participates in cofactor biosynthesis; molybdopterin biosynthesis. Its function is as follows. Catalyzes, together with MoaC, the conversion of 5'-GTP to cyclic pyranopterin monophosphate (cPMP or molybdopterin precursor Z). Functionally, catalyzes the cyclization of GTP to (8S)-3',8-cyclo-7,8-dihydroguanosine 5'-triphosphate. In Paenarthrobacter nicotinovorans (Arthrobacter nicotinovorans), this protein is GTP 3',8-cyclase.